Reading from the N-terminus, the 291-residue chain is Protein ILRUN (291 aa).

A disordered region spans residues 199-291 (NTQPHRKVEG…LHGPYPFGQS (93 aa)). Residues 212–228 (PFASPQKNRQSDENNLT) show a composition bias toward polar residues. Phosphoserine occurs at positions 215, 222, and 265. Residues 257 to 276 (LSQSSVNLSPSSPANNLSVV) are compositionally biased toward low complexity.

Interacts with IRF3; the interaction inhibits IRF3 binding to its DNA consensus sequence.

It localises to the cytoplasm. The protein resides in the nucleus. Its function is as follows. Negative regulator of innate antiviral response. Blocks IRF3-dependent cytokine production such as IFNA, IFNB and TNF. Interacts with IRF3 and inhibits IRF3 recruitment to type I IFN promoter sequences while also reducing nuclear levels of the coactivators EP300 and CREBBP. This chain is Protein ILRUN, found in Mus musculus (Mouse).